The sequence spans 819 residues: Leucine--tRNA ligase (819 aa).

The 'HIGH' region signature appears at 42–53; it reads PYPSGAKLHIGH. Positions 578-582 match the 'KMSKS' region motif; sequence RMSKS. K581 is an ATP binding site.

The protein belongs to the class-I aminoacyl-tRNA synthetase family.

It localises to the cytoplasm. The catalysed reaction is tRNA(Leu) + L-leucine + ATP = L-leucyl-tRNA(Leu) + AMP + diphosphate. This chain is Leucine--tRNA ligase, found in Caldanaerobacter subterraneus subsp. tengcongensis (strain DSM 15242 / JCM 11007 / NBRC 100824 / MB4) (Thermoanaerobacter tengcongensis).